Here is a 246-residue protein sequence, read N- to C-terminus: Mast cell protease 1 (246 aa).

Residues 1–18 form the signal peptide; it reads MQALLFLLALLWPPEAGA. Residues 19 to 20 constitute a propeptide, activation peptide; that stretch reads EE. The 224-residue stretch at 21-244 folds into the Peptidase S1 domain; that stretch reads IIGGVESKPH…YVPWINLVIR (224 aa). C50 and C66 are joined by a disulfide. Catalysis depends on charge relay system residues H65 and D109. Intrachain disulfides connect C143-C208 and C174-C187. S202 (charge relay system) is an active-site residue.

Belongs to the peptidase S1 family. Granzyme subfamily.

The polypeptide is Mast cell protease 1 (Meriones unguiculatus (Mongolian jird)).